The sequence spans 251 residues: CDP-diacylglycerol pyrophosphatase (251 aa).

Residues 4–24 (AGLLFLVMIVIAVVAAGIGYW) traverse the membrane as a helical segment.

It belongs to the Cdh family.

The protein resides in the cell inner membrane. It catalyses the reaction a CDP-1,2-diacyl-sn-glycerol + H2O = a 1,2-diacyl-sn-glycero-3-phosphate + CMP + 2 H(+). The protein operates within phospholipid metabolism; CDP-diacylglycerol degradation; phosphatidate from CDP-diacylglycerol: step 1/1. The protein is CDP-diacylglycerol pyrophosphatase of Shigella boydii serotype 4 (strain Sb227).